Here is a 236-residue protein sequence, read N- to C-terminus: Phosphatidylserine decarboxylase proenzyme (236 aa).

Ser194 (schiff-base intermediate with substrate; via pyruvic acid) is an active-site residue. Position 194 is a pyruvic acid (Ser); by autocatalysis (Ser194).

The protein belongs to the phosphatidylserine decarboxylase family. PSD-A subfamily. As to quaternary structure, heterodimer of a large membrane-associated beta subunit and a small pyruvoyl-containing alpha subunit. It depends on pyruvate as a cofactor. Post-translationally, is synthesized initially as an inactive proenzyme. Formation of the active enzyme involves a self-maturation process in which the active site pyruvoyl group is generated from an internal serine residue via an autocatalytic post-translational modification. Two non-identical subunits are generated from the proenzyme in this reaction, and the pyruvate is formed at the N-terminus of the alpha chain, which is derived from the carboxyl end of the proenzyme. The post-translation cleavage follows an unusual pathway, termed non-hydrolytic serinolysis, in which the side chain hydroxyl group of the serine supplies its oxygen atom to form the C-terminus of the beta chain, while the remainder of the serine residue undergoes an oxidative deamination to produce ammonia and the pyruvoyl prosthetic group on the alpha chain.

It is found in the cell membrane. It carries out the reaction a 1,2-diacyl-sn-glycero-3-phospho-L-serine + H(+) = a 1,2-diacyl-sn-glycero-3-phosphoethanolamine + CO2. It participates in phospholipid metabolism; phosphatidylethanolamine biosynthesis; phosphatidylethanolamine from CDP-diacylglycerol: step 2/2. Its function is as follows. Catalyzes the formation of phosphatidylethanolamine (PtdEtn) from phosphatidylserine (PtdSer). The sequence is that of Phosphatidylserine decarboxylase proenzyme from Rhodospirillum rubrum (strain ATCC 11170 / ATH 1.1.1 / DSM 467 / LMG 4362 / NCIMB 8255 / S1).